Here is a 618-residue protein sequence, read N- to C-terminus: Carbamoyl phosphate synthase large chain, C-terminal section (618 aa).

The segment at Met-1–Glu-78 is oligomerization domain. The interval Ser-79–Glu-477 is carbamoyl phosphate synthetic domain. Positions Ser-208–Leu-399 constitute an ATP-grasp domain. ATP is bound by residues Arg-244, Lys-283, Leu-285, Glu-290, Gly-315, Val-316, His-317, Ser-318, Gln-358, and Glu-370. 3 residues coordinate Mg(2+): Gln-358, Glu-370, and Asn-372. Residues Gln-358, Glu-370, and Asn-372 each coordinate Mn(2+). An MGS-like domain is found at Met-476–Phe-618. The tract at residues Leu-478–Phe-618 is allosteric domain.

Belongs to the CarB family. Composed of two chains; the small (or glutamine) chain promotes the hydrolysis of glutamine to ammonia, which is used by the large (or ammonia) chain to synthesize carbamoyl phosphate. Tetramer of heterodimers (alpha,beta)4. Requires Mg(2+) as cofactor. Mn(2+) is required as a cofactor.

The catalysed reaction is hydrogencarbonate + L-glutamine + 2 ATP + H2O = carbamoyl phosphate + L-glutamate + 2 ADP + phosphate + 2 H(+). It carries out the reaction hydrogencarbonate + NH4(+) + 2 ATP = carbamoyl phosphate + 2 ADP + phosphate + 2 H(+). The protein operates within amino-acid biosynthesis; L-arginine biosynthesis; carbamoyl phosphate from bicarbonate: step 1/1. Its pathway is pyrimidine metabolism; UMP biosynthesis via de novo pathway; (S)-dihydroorotate from bicarbonate: step 1/3. Functionally, large subunit of the glutamine-dependent carbamoyl phosphate synthetase (CPSase). CPSase catalyzes the formation of carbamoyl phosphate from the ammonia moiety of glutamine, carbonate, and phosphate donated by ATP, constituting the first step of 2 biosynthetic pathways, one leading to arginine and/or urea and the other to pyrimidine nucleotides. The large subunit (synthetase) binds the substrates ammonia (free or transferred from glutamine from the small subunit), hydrogencarbonate and ATP and carries out an ATP-coupled ligase reaction, activating hydrogencarbonate by forming carboxy phosphate which reacts with ammonia to form carbamoyl phosphate. The polypeptide is Carbamoyl phosphate synthase large chain, C-terminal section (carB2) (Methanocaldococcus jannaschii (strain ATCC 43067 / DSM 2661 / JAL-1 / JCM 10045 / NBRC 100440) (Methanococcus jannaschii)).